The chain runs to 244 residues: 6-carboxyhexanoate--CoA ligase (244 aa).

Belongs to the BioW family. In terms of assembly, homodimer. Mg(2+) serves as cofactor.

The catalysed reaction is heptanedioate + ATP + CoA = 6-carboxyhexanoyl-CoA + AMP + diphosphate. It participates in metabolic intermediate metabolism; pimeloyl-CoA biosynthesis; pimeloyl-CoA from pimelate: step 1/1. Its function is as follows. Catalyzes the transformation of pimelate into pimeloyl-CoA with concomitant hydrolysis of ATP to AMP. The protein is 6-carboxyhexanoate--CoA ligase of Methanococcus maripaludis (strain C6 / ATCC BAA-1332).